Here is a 547-residue protein sequence, read N- to C-terminus: Phenylalanine--tRNA ligase beta subunit (547 aa).

Residues 269-344 (LDVRFMEVDV…IGYGYENITP (76 aa)) form the B5 domain. The Mg(2+) site is built by Asp322, Asp328, Glu331, and Asp332.

It belongs to the phenylalanyl-tRNA synthetase beta subunit family. Type 2 subfamily. Tetramer of two alpha and two beta subunits. Requires Mg(2+) as cofactor.

It localises to the cytoplasm. The enzyme catalyses tRNA(Phe) + L-phenylalanine + ATP = L-phenylalanyl-tRNA(Phe) + AMP + diphosphate + H(+). This chain is Phenylalanine--tRNA ligase beta subunit, found in Archaeoglobus fulgidus (strain ATCC 49558 / DSM 4304 / JCM 9628 / NBRC 100126 / VC-16).